The primary structure comprises 307 residues: Cytochrome f (307 aa).

The N-terminal stretch at 1–24 is a signal peptide; the sequence is MKKNLFLVSVFASLFVGTANNALA. Positions 25, 45, 48, and 49 each coordinate heme. The helical transmembrane segment at 273–293 threads the bilayer; sequence LQGLVIFLGFVLIAQVFLVLK.

It belongs to the cytochrome f family. In terms of assembly, the 4 large subunits of the cytochrome b6-f complex are cytochrome b6, subunit IV (17 kDa polypeptide, petD), cytochrome f and the Rieske protein, while the 4 small subunits are PetG, PetL, PetM and PetN. The complex functions as a dimer. It depends on heme as a cofactor.

The protein localises to the plastid. It localises to the chloroplast thylakoid membrane. Component of the cytochrome b6-f complex, which mediates electron transfer between photosystem II (PSII) and photosystem I (PSI), cyclic electron flow around PSI, and state transitions. The protein is Cytochrome f of Ostreococcus tauri.